Reading from the N-terminus, the 95-residue chain is Translation initiation factor 1A (95 aa).

Residues 6–80 (SRKNLRMPEE…EKADITWRYE (75 aa)) form the S1-like domain.

Belongs to the eIF-1A family.

Functionally, seems to be required for maximal rate of protein biosynthesis. Enhances ribosome dissociation into subunits and stabilizes the binding of the initiator Met-tRNA(I) to 40 S ribosomal subunits. The sequence is that of Translation initiation factor 1A from Haloarcula marismortui (strain ATCC 43049 / DSM 3752 / JCM 8966 / VKM B-1809) (Halobacterium marismortui).